A 179-amino-acid chain; its full sequence is Large ribosomal subunit protein uL5 (179 aa).

Belongs to the universal ribosomal protein uL5 family. In terms of assembly, part of the 50S ribosomal subunit; part of the 5S rRNA/L5/L18/L25 subcomplex. Contacts the 5S rRNA and the P site tRNA. Forms a bridge to the 30S subunit in the 70S ribosome.

This is one of the proteins that bind and probably mediate the attachment of the 5S RNA into the large ribosomal subunit, where it forms part of the central protuberance. In the 70S ribosome it contacts protein S13 of the 30S subunit (bridge B1b), connecting the 2 subunits; this bridge is implicated in subunit movement. Contacts the P site tRNA; the 5S rRNA and some of its associated proteins might help stabilize positioning of ribosome-bound tRNAs. This Neisseria meningitidis serogroup A / serotype 4A (strain DSM 15465 / Z2491) protein is Large ribosomal subunit protein uL5.